We begin with the raw amino-acid sequence, 923 residues long: Ubiquitin carboxyl-terminal hydrolase 10 (923 aa).

The DUSP domain occupies 19–134 (FTPEEEKRIV…GGPPIERKLI (116 aa)). A disordered region spans residues 65–91 (NECSTGESSEAPRPGPIDNHDIIESDS). One can recognise a USP domain in the interval 304–895 (AGLSNLGNTC…AAYVLFYRRV (592 aa)). The active-site Nucleophile is the Cys313. The active-site Proton acceptor is the His853.

Belongs to the peptidase C19 family.

The catalysed reaction is Thiol-dependent hydrolysis of ester, thioester, amide, peptide and isopeptide bonds formed by the C-terminal Gly of ubiquitin (a 76-residue protein attached to proteins as an intracellular targeting signal).. Recognizes and hydrolyzes the peptide bond at the C-terminal Gly of ubiquitin. Involved in the processing of poly-ubiquitin precursors as well as that of ubiquitinated proteins. The sequence is that of Ubiquitin carboxyl-terminal hydrolase 10 (UBP10) from Arabidopsis thaliana (Mouse-ear cress).